The chain runs to 453 residues: Midnolin-A (453 aa).

The region spanning 20–94 (MNLNIQSTTG…LTLLPSVEAG (75 aa)) is the Ubiquitin-like domain. 4 disordered regions span residues 184–219 (SHLA…TTSV), 232–256 (CAEQ…RSRK), 333–376 (RNAK…ENRA), and 390–429 (QKRL…EGSL). The span at 206-219 (HCNGPHSSPLTTSV) shows a compositional bias: polar residues. Low complexity-rich tracts occupy residues 239 to 252 (STRG…SPSS) and 338 to 351 (TSPQ…TTHP). Residues 365–376 (SGDRLRQTENRA) show a composition bias toward basic and acidic residues. Residues 390 to 399 (QKRLRRKARR) are compositionally biased toward basic residues. Low complexity predominate over residues 415–428 (RTSSNSSTSSGEGS).

Its subcellular location is the nucleus. The protein localises to the cytoplasm. It localises to the cytosol. The protein resides in the nucleolus. Facilitates ubiquitin-independent proteasomal degradation of polycomb protein CBX4. Plays a role in inhibiting the activity of glucokinase GCK and both glucose-induced and basal insulin secretion. This is Midnolin-A (midn-a) from Xenopus laevis (African clawed frog).